A 503-amino-acid chain; its full sequence is Efflux pump vrtL (503 aa).

Residues 1–59 (MSKLSDNHSSASEGEKEAGDLESGPTAISSEPSFDDADRDPNLITWDGPKDPENPKNWP) are disordered. Asn7 carries N-linked (GlcNAc...) asparagine glycosylation. Helical transmembrane passes span 68-88 (WTVS…APAM), 101-121 (IEIY…PIFF), 133-153 (LLQI…FATT), 162-182 (FLAG…ISDM), 194-214 (VYTL…GFIA), 221-241 (WVFW…FFWL), 295-315 (IVFC…LMFA), 329-349 (PGIG…GLFF), 377-397 (SLAV…WSIG), 401-421 (WIMP…CLQG), 432-454 (TYAA…GFPL), and 471-491 (LLAF…WHFG).

The protein belongs to the major facilitator superfamily.

Its subcellular location is the membrane. Its function is as follows. Efflux pump; part of the gene cluster that mediates the biosynthesis of viridicatumtoxin, a tetracycline-like fungal meroterpenoid with a unique, fused spirobicyclic ring system. The sequence is that of Efflux pump vrtL from Penicillium aethiopicum.